Here is a 587-residue protein sequence, read N- to C-terminus: Aspartate--tRNA ligase (587 aa).

Glutamate 174 is an L-aspartate binding site. The interval 198-201 (QTFK) is aspartate. L-aspartate is bound at residue arginine 220. Residues 220 to 222 (RDE) and glutamine 229 each bind ATP. Histidine 447 contacts L-aspartate. Glutamate 481 lines the ATP pocket. Position 488 (arginine 488) interacts with L-aspartate. An ATP-binding site is contributed by 533-536 (GLDR).

The protein belongs to the class-II aminoacyl-tRNA synthetase family. Type 1 subfamily. Homodimer.

The protein resides in the cytoplasm. It catalyses the reaction tRNA(Asp) + L-aspartate + ATP = L-aspartyl-tRNA(Asp) + AMP + diphosphate. In terms of biological role, catalyzes the attachment of L-aspartate to tRNA(Asp) in a two-step reaction: L-aspartate is first activated by ATP to form Asp-AMP and then transferred to the acceptor end of tRNA(Asp). This is Aspartate--tRNA ligase from Porphyromonas gingivalis (strain ATCC BAA-308 / W83).